A 330-amino-acid polypeptide reads, in one-letter code: Methionyl-tRNA formyltransferase (330 aa).

Residue 117-120 (SLLP) coordinates (6S)-5,6,7,8-tetrahydrofolate.

This sequence belongs to the Fmt family.

The catalysed reaction is L-methionyl-tRNA(fMet) + (6R)-10-formyltetrahydrofolate = N-formyl-L-methionyl-tRNA(fMet) + (6S)-5,6,7,8-tetrahydrofolate + H(+). Its function is as follows. Attaches a formyl group to the free amino group of methionyl-tRNA(fMet). The formyl group appears to play a dual role in the initiator identity of N-formylmethionyl-tRNA by promoting its recognition by IF2 and preventing the misappropriation of this tRNA by the elongation apparatus. The sequence is that of Methionyl-tRNA formyltransferase from Verminephrobacter eiseniae (strain EF01-2).